Reading from the N-terminus, the 274-residue chain is NH(3)-dependent NAD(+) synthetase (274 aa).

46–53 (GISGGQDS) is a binding site for ATP. D52 is a Mg(2+) binding site. R140 is a binding site for deamido-NAD(+). T160 contacts ATP. E165 is a Mg(2+) binding site. 2 residues coordinate deamido-NAD(+): K173 and D180. K189 and T211 together coordinate ATP. A deamido-NAD(+)-binding site is contributed by 260–261 (HK).

The protein belongs to the NAD synthetase family. As to quaternary structure, homodimer.

The catalysed reaction is deamido-NAD(+) + NH4(+) + ATP = AMP + diphosphate + NAD(+) + H(+). It participates in cofactor biosynthesis; NAD(+) biosynthesis; NAD(+) from deamido-NAD(+) (ammonia route): step 1/1. Catalyzes the ATP-dependent amidation of deamido-NAD to form NAD. Uses ammonia as a nitrogen source. This Streptococcus pyogenes serotype M2 (strain MGAS10270) protein is NH(3)-dependent NAD(+) synthetase.